A 588-amino-acid polypeptide reads, in one-letter code: BTB/POZ domain-containing protein At3g26490 (588 aa).

Residues 28-99 (NDLVIQVKST…CYGITITLCA (72 aa)) enclose the BTB domain. An NPH3 domain is found at 218–507 (RWWGEDLAEL…VQILFVEQAR (290 aa)). A phosphoserine mark is found at Ser376 and Ser378. Position 448 is a phosphotyrosine (Tyr448). Positions 529–554 (FTTRREEGGQEEEERDETKPSGGFLQ) are disordered.

This sequence belongs to the NPH3 family.

It participates in protein modification; protein ubiquitination. In terms of biological role, may act as a substrate-specific adapter of an E3 ubiquitin-protein ligase complex (CUL3-RBX1-BTB) which mediates the ubiquitination and subsequent proteasomal degradation of target proteins. This chain is BTB/POZ domain-containing protein At3g26490, found in Arabidopsis thaliana (Mouse-ear cress).